The chain runs to 188 residues: Protein YOP1 (188 aa).

Residues 1–35 (MAEIAGNLQRILQSLDRQFAGNKYLQEFERKTGFP) are Cytoplasmic-facing. The chain crosses the membrane as a helical span at residues 36–55 (KSYAIAGAGVAYLFIIFINV). Topologically, residues 56–57 (GG) are lumenal. A helical transmembrane segment spans residues 58 to 78 (VGEILSNFLGFVLPCYYSLHA). The Cytoplasmic segment spans residues 79–88 (IKTTTTADDT). A helical membrane pass occupies residues 89–105 (ELLTYWIVFAFFSVIEF). Over 106-108 (WSK) the chain is Lumenal. The chain crosses the membrane as a helical span at residues 109-127 (AILYWVPFYWFFKTIFLIF). The Cytoplasmic portion of the chain corresponds to 128-188 (IALPQLGGAS…TGAASHQSSD (61 aa)). The segment at 163–188 (ISSKMEQAAKGASARATGAASHQSSD) is disordered. Residues 170–188 (AAKGASARATGAASHQSSD) are compositionally biased toward low complexity.

The protein belongs to the DP1 family. As to quaternary structure, oligomer.

It is found in the endoplasmic reticulum membrane. Its subcellular location is the golgi apparatus membrane. Its function is as follows. Required to generate and maintain the structure of the tubular endoplasmic reticulum network and the vacuole. Induces high curvature in membranes and causes membrane tubule formation. Involved in membrane/vesicle trafficking. The chain is Protein YOP1 (YOP1) from Eremothecium gossypii (strain ATCC 10895 / CBS 109.51 / FGSC 9923 / NRRL Y-1056) (Yeast).